Consider the following 607-residue polypeptide: Granule-bound starch synthase 1, chloroplastic/amyloplastic (607 aa).

A chloroplast-targeting transit peptide spans 1–77 (MASITASHHF…RPGCSATIVC (77 aa)). Position 95 (K95) interacts with ADP-alpha-D-glucose. The segment at 585-607 (SGSEPGVEGEEIAPLAKENVATP) is disordered.

The protein belongs to the glycosyltransferase 1 family. Bacterial/plant glycogen synthase subfamily.

It localises to the plastid. It is found in the chloroplast. The protein resides in the amyloplast. It catalyses the reaction an NDP-alpha-D-glucose + [(1-&gt;4)-alpha-D-glucosyl](n) = [(1-&gt;4)-alpha-D-glucosyl](n+1) + a ribonucleoside 5'-diphosphate + H(+). It functions in the pathway glycan biosynthesis; starch biosynthesis. This Solanum tuberosum (Potato) protein is Granule-bound starch synthase 1, chloroplastic/amyloplastic (WAXY).